Consider the following 248-residue polypeptide: 2,3-bisphosphoglycerate-dependent phosphoglycerate mutase (248 aa).

Substrate is bound by residues 8–15 (RHGESTWN), 21–22 (TG), R60, 87–90 (ERHY), K98, 114–115 (RR), and 183–184 (GN). H9 (tele-phosphohistidine intermediate) is an active-site residue. The active-site Proton donor/acceptor is E87.

Belongs to the phosphoglycerate mutase family. BPG-dependent PGAM subfamily. Homodimer.

It carries out the reaction (2R)-2-phosphoglycerate = (2R)-3-phosphoglycerate. It participates in carbohydrate degradation; glycolysis; pyruvate from D-glyceraldehyde 3-phosphate: step 3/5. In terms of biological role, catalyzes the interconversion of 2-phosphoglycerate and 3-phosphoglycerate. The chain is 2,3-bisphosphoglycerate-dependent phosphoglycerate mutase from Burkholderia vietnamiensis (strain G4 / LMG 22486) (Burkholderia cepacia (strain R1808)).